A 245-amino-acid polypeptide reads, in one-letter code: Methyltransferase-like protein 27 (245 aa).

The protein is Methyltransferase-like protein 27 of Homo sapiens (Human).